The sequence spans 332 residues: Glycerol-3-phosphate dehydrogenase [NAD(P)+] (332 aa).

NADPH is bound by residues W11, R30, and K108. The sn-glycerol 3-phosphate site is built by K108, G137, and S139. Residue A141 participates in NADPH binding. The sn-glycerol 3-phosphate site is built by K192, D245, S255, R256, and N257. Catalysis depends on K192, which acts as the Proton acceptor. R256 lines the NADPH pocket. The NADPH site is built by V280 and E282.

It belongs to the NAD-dependent glycerol-3-phosphate dehydrogenase family.

The protein localises to the cytoplasm. It catalyses the reaction sn-glycerol 3-phosphate + NAD(+) = dihydroxyacetone phosphate + NADH + H(+). It carries out the reaction sn-glycerol 3-phosphate + NADP(+) = dihydroxyacetone phosphate + NADPH + H(+). It participates in membrane lipid metabolism; glycerophospholipid metabolism. In terms of biological role, catalyzes the reduction of the glycolytic intermediate dihydroxyacetone phosphate (DHAP) to sn-glycerol 3-phosphate (G3P), the key precursor for phospholipid synthesis. This is Glycerol-3-phosphate dehydrogenase [NAD(P)+] from Burkholderia lata (strain ATCC 17760 / DSM 23089 / LMG 22485 / NCIMB 9086 / R18194 / 383).